Reading from the N-terminus, the 142-residue chain is Small ribosomal subunit protein uS12z (142 aa).

Position 61 is a hydroxyproline (Pro-61).

Belongs to the universal ribosomal protein uS12 family.

This is Small ribosomal subunit protein uS12z (RPS23A) from Arabidopsis thaliana (Mouse-ear cress).